A 278-amino-acid polypeptide reads, in one-letter code: MANQTPIPVIVNGAAGKMGRETIKAVVQAADMTLMGAVDTNPEYQGKDAGEVAGLNEPTEVPITDQLEPILAYVAGERHLQPGVMVDFTHPDAVYDNVRSAIAYGIRPVVGTTGLSSKQIEQLADFAEKASTGCLIIPNFSIGMVLLQQAAIAASQYFDHVEIIELHHNQKADAPSGTAIQTAQMLAEMGKTFNQPAVKETEKLPGARGSLAGEGIRIHSVRLPGLIAHQEVIFGAPGQIYTLRHDTSDRTAYMPGVLLAIRKVLQLKSLVYGLEKIL.

NAD(+) contacts are provided by residues 13–18 (GAAGKM) and 111–113 (GTT). Catalysis depends on H167, which acts as the Proton donor/acceptor. Residue H168 coordinates (S)-2,3,4,5-tetrahydrodipicolinate. The active-site Proton donor is K171. Residue 177–178 (GT) coordinates (S)-2,3,4,5-tetrahydrodipicolinate.

This sequence belongs to the DapB family.

The protein resides in the cytoplasm. It carries out the reaction (S)-2,3,4,5-tetrahydrodipicolinate + NAD(+) + H2O = (2S,4S)-4-hydroxy-2,3,4,5-tetrahydrodipicolinate + NADH + H(+). It catalyses the reaction (S)-2,3,4,5-tetrahydrodipicolinate + NADP(+) + H2O = (2S,4S)-4-hydroxy-2,3,4,5-tetrahydrodipicolinate + NADPH + H(+). Its pathway is amino-acid biosynthesis; L-lysine biosynthesis via DAP pathway; (S)-tetrahydrodipicolinate from L-aspartate: step 4/4. Functionally, catalyzes the conversion of 4-hydroxy-tetrahydrodipicolinate (HTPA) to tetrahydrodipicolinate. This is 4-hydroxy-tetrahydrodipicolinate reductase from Mastigocladus laminosus (Fischerella sp.).